Reading from the N-terminus, the 499-residue chain is Salviol synthase (499 aa).

Residues 4–24 (HIPSLVLCISFFIFFKIVSKL) form a helical membrane-spanning segment. Heme is bound at residue Cys-436.

Belongs to the cytochrome P450 family. The cofactor is heme. As to expression, expressed in leaf glandular trichomes.

Its subcellular location is the membrane. It carries out the reaction ferruginol + reduced [NADPH--hemoprotein reductase] + O2 = salviol + oxidized [NADPH--hemoprotein reductase] + H2O + H(+). It functions in the pathway secondary metabolite biosynthesis; terpenoid biosynthesis. Functionally, monooxygenase involved in the biosynthesis of labdane-related diterpenes natural products. Catalyzes the oxidation of ferruginol to produce salviol. Salviol is an intermediate in the biosynthesis of carnosate, a potent antioxidant. The polypeptide is Salviol synthase (Salvia pomifera (Apple sage)).